Reading from the N-terminus, the 250-residue chain is ATP synthase subunit a (250 aa).

6 consecutive transmembrane segments (helical) span residues A29–S49, F84–V104, I114–I134, L143–I163, I185–I205, and A208–L228.

Belongs to the ATPase A chain family. F-type ATPases have 2 components, CF(1) - the catalytic core - and CF(0) - the membrane proton channel. CF(1) has five subunits: alpha(3), beta(3), gamma(1), delta(1), epsilon(1). CF(0) has three main subunits: a(1), b(2) and c(9-12). The alpha and beta chains form an alternating ring which encloses part of the gamma chain. CF(1) is attached to CF(0) by a central stalk formed by the gamma and epsilon chains, while a peripheral stalk is formed by the delta and b chains.

The protein resides in the cell inner membrane. In terms of biological role, key component of the proton channel; it plays a direct role in the translocation of protons across the membrane. The sequence is that of ATP synthase subunit a from Rhizobium rhizogenes (strain K84 / ATCC BAA-868) (Agrobacterium radiobacter).